Reading from the N-terminus, the 35-residue chain is Mu-theraphotoxin-Hd1a (35 aa).

Cystine bridges form between Cys2–Cys17, Cys9–Cys24, and Cys16–Cys31.

The protein belongs to the neurotoxin 10 (Hwtx-1) family. 22 (Htx-4) subfamily. As to expression, expressed by the venom gland.

The protein resides in the secreted. Its function is as follows. Gating-modifier toxin that reversibly and voltage-independently inhibits human Nav1.1/SCN1A and Nav1.7/SCN9A (IC(50)=111 nM). It also shows moderate inhibition on Nav1.2/SCN2A (1 uM inhibits current by 55%), Nav1.6/SCN8A (31%), Nav1.3/SCN5A (27%) and Nav1.4/SCN4A (23%). This toxin inhibits Nav1.7/SCN9A by interacting with the S3b-S4 paddle motif in channel domain II. The protein is Mu-theraphotoxin-Hd1a of Cyriopagopus doriae (Tarantula spider).